Reading from the N-terminus, the 967-residue chain is Sulfite dehydrogenase subunit A (967 aa).

One can recognise a 4Fe-4S Mo/W bis-MGD-type domain in the interval 15-71 (VEVKETTCYMCACRCGIRVHLRDGEVRYIDGNPNHPLNKGVICAKGSSGIMKQYSPG). Positions 22, 25, 29, and 57 each coordinate [4Fe-4S] cluster.

Belongs to the prokaryotic molybdopterin-containing oxidoreductase family. In terms of assembly, forms a heterotrimeric membrane-bound complex composed of a catalytic heterodimer (SoeAB) and a membrane anchor protein (SoeC). It depends on [4Fe-4S] cluster as a cofactor. Mo-bis(molybdopterin guanine dinucleotide) serves as cofactor.

Its subcellular location is the cell inner membrane. The enzyme catalyses a quinone + sulfite + H2O = a quinol + sulfate. It carries out the reaction a menaquinone + sulfite + H2O = a menaquinol + sulfate. In terms of biological role, part of the SoeABC complex that catalyzes the oxidation of sulfite to sulfate. The polypeptide is Sulfite dehydrogenase subunit A (Allochromatium vinosum (strain ATCC 17899 / DSM 180 / NBRC 103801 / NCIMB 10441 / D) (Chromatium vinosum)).